Here is a 419-residue protein sequence, read N- to C-terminus: MAPK/MAK/MRK overlapping kinase (419 aa).

The region spanning 4-285 is the Protein kinase domain; the sequence is YKAIGKIGEG…AHQALQHPYF (282 aa). ATP-binding positions include 10–18 and lysine 33; that span reads IGEGTFSEV. The active-site Proton acceptor is the aspartate 128. 2 disordered regions span residues 285 to 344 and 390 to 419; these read FQEQ…RGPA and PASKKTDPQKDLKPAPQQCRLPTIVRKGGR. Basic and acidic residues-rich tracts occupy residues 322 to 338 and 393 to 402; these read KEGRKQKQSLKQEEDRP and KKTDPQKDLK.

It belongs to the protein kinase superfamily. CMGC Ser/Thr protein kinase family. CDC2/CDKX subfamily. Mg(2+) is required as a cofactor. In terms of processing, autophosphorylated. In terms of tissue distribution, expressed in heart, brain, lung, kidney, and pancreas, and at very low levels in placenta, liver and skeletal muscle. Detected in retina.

The protein localises to the cytoplasm. It is found in the cell projection. Its subcellular location is the cilium. It localises to the nucleus. It catalyses the reaction L-seryl-[protein] + ATP = O-phospho-L-seryl-[protein] + ADP + H(+). It carries out the reaction L-threonyl-[protein] + ATP = O-phospho-L-threonyl-[protein] + ADP + H(+). Its activity is regulated as follows. Phosphorylation appears to increase the enzymatic activity. Able to phosphorylate several exogenous substrates and to undergo autophosphorylation. Negatively regulates cilium length in a cAMP and mTORC1 signaling-dependent manner. This chain is MAPK/MAK/MRK overlapping kinase (MOK), found in Homo sapiens (Human).